Reading from the N-terminus, the 290-residue chain is MRIADYSVTKAVLDRHGFTFKKSFGQNFLTDTNILQKIVDTAEIDQNVNVIEIGPGIGALTEFLAENAAEVMAFEIDDRLVPILADTLRDFDNVQVVNQDILKADLQTQIKQFKNPDLPIKVVANLPYYITTPILMHLIESKIPFQEFVVMMQREVADRISAEPNTKAYGSLSIAVQYYMTAKVAFIVPRTVFVPAPNVDSAILKMVRRDQPLIEVKDEDFFFRVSRLSFVHRRKTLWNNLTSHFGKSEDIKAKLEKGLALADIKPSIRGEALSIQDFGKLADALKEVGL.

S-adenosyl-L-methionine-binding residues include Asn27, Leu29, Gly54, Glu75, Asp100, and Asn125.

Belongs to the class I-like SAM-binding methyltransferase superfamily. rRNA adenine N(6)-methyltransferase family. RsmA subfamily.

The protein resides in the cytoplasm. The catalysed reaction is adenosine(1518)/adenosine(1519) in 16S rRNA + 4 S-adenosyl-L-methionine = N(6)-dimethyladenosine(1518)/N(6)-dimethyladenosine(1519) in 16S rRNA + 4 S-adenosyl-L-homocysteine + 4 H(+). Its function is as follows. Specifically dimethylates two adjacent adenosines (A1518 and A1519) in the loop of a conserved hairpin near the 3'-end of 16S rRNA in the 30S particle. May play a critical role in biogenesis of 30S subunits. This chain is Ribosomal RNA small subunit methyltransferase A, found in Streptococcus pyogenes serotype M1.